Reading from the N-terminus, the 380-residue chain is Cytochrome b (380 aa).

The next 4 helical transmembrane spans lie at 34-54, 78-99, 114-134, and 179-199; these read FGSLLGICLLTQILTGLLLAT, WLIRNLHANGASFFFICIYLHI, WNTGIILLLTLMATAFVGYVL, and FFALHFLLPFMIAGLALIHLT. Heme b contacts are provided by His84 and His98. Heme b is bound by residues His183 and His197. His202 contributes to the a ubiquinone binding site. 4 helical membrane passes run 227-247, 289-309, 321-341, and 348-368; these read LKDILGFIIMFLPLTTLALFS, LGGVLALAASVLVLFLVPLLH, LSQFLFWTLVANLLILTWVGS, and FIIIGQLASLTYFTILLLLFP.

Belongs to the cytochrome b family. In terms of assembly, the cytochrome bc1 complex contains 11 subunits: 3 respiratory subunits (MT-CYB, CYC1 and UQCRFS1), 2 core proteins (UQCRC1 and UQCRC2) and 6 low-molecular weight proteins (UQCRH/QCR6, UQCRB/QCR7, UQCRQ/QCR8, UQCR10/QCR9, UQCR11/QCR10 and a cleavage product of UQCRFS1). This cytochrome bc1 complex then forms a dimer. The cofactor is heme b.

It is found in the mitochondrion inner membrane. In terms of biological role, component of the ubiquinol-cytochrome c reductase complex (complex III or cytochrome b-c1 complex) that is part of the mitochondrial respiratory chain. The b-c1 complex mediates electron transfer from ubiquinol to cytochrome c. Contributes to the generation of a proton gradient across the mitochondrial membrane that is then used for ATP synthesis. The protein is Cytochrome b (MT-CYB) of Pinguinus impennis (Great auk).